A 108-amino-acid chain; its full sequence is uncharacterized protein (108 aa).

The tract at residues 81-108 (TNHHQQQQNHQNQQQQQQQPNGIFENNI) is disordered. Low complexity predominate over residues 83–99 (HHQQQQNHQNQQQQQQQ).

This is an uncharacterized protein from Dictyostelium discoideum (Social amoeba).